We begin with the raw amino-acid sequence, 150 residues long: T-complex protein 1 subunit beta (150 aa).

Asp35 serves as a coordination point for Mg(2+). Positions 36, 37, 38, and 39 each coordinate ADP. Positions 36, 37, and 38 each coordinate ATP.

The protein belongs to the TCP-1 chaperonin family. As to quaternary structure, component of the chaperonin-containing T-complex (TRiC), a hexadecamer composed of two identical back-to-back stacked rings enclosing a protein folding chamber. Each ring is made up of eight different subunits: TCP1/CCT1, CCT2, CCT3, CCT4, CCT5, CCT6A/CCT6, CCT7, CCT8. Interacts with PACRG. Interacts with FLCN. Interacts with DLEC1. Interacts with SVEP1.

It is found in the cytoplasm. The enzyme catalyses ATP + H2O = ADP + phosphate + H(+). Its function is as follows. Component of the chaperonin-containing T-complex (TRiC), a molecular chaperone complex that assists the folding of actin, tubulin and other proteins upon ATP hydrolysis. The TRiC complex mediates the folding of WRAP53/TCAB1, thereby regulating telomere maintenance. As part of the TRiC complex may play a role in the assembly of BBSome, a complex involved in ciliogenesis regulating transports vesicles to the cilia. This chain is T-complex protein 1 subunit beta, found in Mesocricetus auratus (Golden hamster).